We begin with the raw amino-acid sequence, 228 residues long: Probable septum site-determining protein MinC (228 aa).

It belongs to the MinC family. Interacts with MinD and FtsZ.

Its function is as follows. Cell division inhibitor that blocks the formation of polar Z ring septums. Rapidly oscillates between the poles of the cell to destabilize FtsZ filaments that have formed before they mature into polar Z rings. Prevents FtsZ polymerization. The sequence is that of Probable septum site-determining protein MinC from Symbiobacterium thermophilum (strain DSM 24528 / JCM 14929 / IAM 14863 / T).